A 591-amino-acid chain; its full sequence is L-fucose isomerase (591 aa).

Active-site proton acceptor residues include E337 and D361. 3 residues coordinate Mn(2+): E337, D361, and H528.

The protein belongs to the L-fucose isomerase family. As to quaternary structure, homohexamer. Mn(2+) is required as a cofactor.

The protein localises to the cytoplasm. The enzyme catalyses L-fucose = L-fuculose. It functions in the pathway carbohydrate degradation; L-fucose degradation; L-lactaldehyde and glycerone phosphate from L-fucose: step 1/3. Functionally, converts the aldose L-fucose into the corresponding ketose L-fuculose. The protein is L-fucose isomerase of Escherichia coli (strain UTI89 / UPEC).